A 105-amino-acid chain; its full sequence is Small ribosomal subunit protein bS20 (105 aa).

The protein belongs to the bacterial ribosomal protein bS20 family.

Its function is as follows. Binds directly to 16S ribosomal RNA. In Caldanaerobacter subterraneus subsp. tengcongensis (strain DSM 15242 / JCM 11007 / NBRC 100824 / MB4) (Thermoanaerobacter tengcongensis), this protein is Small ribosomal subunit protein bS20.